Here is a 429-residue protein sequence, read N- to C-terminus: MKKQNNLRSLAAQAVEQVVEQGQSLSNVLPPLQQKVADKDKALLQELCFGVLRTLSQLEWLINKLMSRPMTGKQRTVHYLIMVGFYQLLYTRVPPHAALAETVEGAVSIKRPQLKGLINGVLRQFQRQQETLLNEFATSDARFLHPGWLVKRLQNAYPTQWQRIIDANNQRPPMWLRVNRTHHTRDGWLGLLEDAGMKGYPHPDYPDAVRLETPAPVHALPGFAEGWVTVQDASAQGCAVFLAPQNGEHILDLCAAPGGKTTHILEVAPEADVLAVDIDEQRLSRVYDNLKRLGMKATVKQGDGRYPAQWCGEQQFDRILLDAPCSATGVIRRHPDIKWLRRDRDIAELAQLQAEILDAVWPRLKPGGTLVYATCSVLPEENRDQIKTFLQRTPDAALSETGTPDQPGQQNLPGGEEGDGFFYAKLIKK.

Residues 254–260 (CAAPGGK), D277, D303, and D322 each bind S-adenosyl-L-methionine. Residue C375 is the Nucleophile of the active site. The segment at 397-419 (ALSETGTPDQPGQQNLPGGEEGD) is disordered. Residues 400 to 412 (ETGTPDQPGQQNL) are compositionally biased toward polar residues.

Belongs to the class I-like SAM-binding methyltransferase superfamily. RsmB/NOP family.

The protein localises to the cytoplasm. The enzyme catalyses cytidine(967) in 16S rRNA + S-adenosyl-L-methionine = 5-methylcytidine(967) in 16S rRNA + S-adenosyl-L-homocysteine + H(+). Specifically methylates the cytosine at position 967 (m5C967) of 16S rRNA. The chain is Ribosomal RNA small subunit methyltransferase B from Salmonella choleraesuis (strain SC-B67).